The sequence spans 155 residues: Small ribosomal subunit protein uS7c (155 aa).

This sequence belongs to the universal ribosomal protein uS7 family. In terms of assembly, part of the 30S ribosomal subunit.

It localises to the plastid. It is found in the chloroplast. Its function is as follows. One of the primary rRNA binding proteins, it binds directly to 16S rRNA where it nucleates assembly of the head domain of the 30S subunit. This is Small ribosomal subunit protein uS7c (rps7) from Staurastrum punctulatum (Green alga).